A 543-amino-acid polypeptide reads, in one-letter code: CTP synthase (543 aa).

The amidoligase domain stretch occupies residues 1 to 265 (MTNYIFVTGG…DQLVVDRFGL (265 aa)). Ser-13 contacts CTP. Ser-13 provides a ligand contact to UTP. Residues 14–19 (SLGKGI) and Asp-71 contribute to the ATP site. Residues Asp-71 and Glu-139 each coordinate Mg(2+). Residues 146-148 (DIE), 186-191 (KTKPTQ), and Lys-222 contribute to the CTP site. Residues 186–191 (KTKPTQ) and Lys-222 contribute to the UTP site. 238 to 240 (KDV) is a binding site for ATP. One can recognise a Glutamine amidotransferase type-1 domain in the interval 290–541 (NIGMIGKYVE…VAAAGKYQKE (252 aa)). An L-glutamine-binding site is contributed by Gly-351. The active-site Nucleophile; for glutamine hydrolysis is the Cys-378. L-glutamine-binding positions include 379 to 382 (LGMQ), Glu-402, and Arg-469. Residues His-514 and Glu-516 contribute to the active site.

The protein belongs to the CTP synthase family. As to quaternary structure, homotetramer.

The enzyme catalyses UTP + L-glutamine + ATP + H2O = CTP + L-glutamate + ADP + phosphate + 2 H(+). It carries out the reaction L-glutamine + H2O = L-glutamate + NH4(+). It catalyses the reaction UTP + NH4(+) + ATP = CTP + ADP + phosphate + 2 H(+). Its pathway is pyrimidine metabolism; CTP biosynthesis via de novo pathway; CTP from UDP: step 2/2. With respect to regulation, allosterically activated by GTP, when glutamine is the substrate; GTP has no effect on the reaction when ammonia is the substrate. The allosteric effector GTP functions by stabilizing the protein conformation that binds the tetrahedral intermediate(s) formed during glutamine hydrolysis. Inhibited by the product CTP, via allosteric rather than competitive inhibition. Functionally, catalyzes the ATP-dependent amination of UTP to CTP with either L-glutamine or ammonia as the source of nitrogen. Regulates intracellular CTP levels through interactions with the four ribonucleotide triphosphates. This Alteromonas mediterranea (strain DSM 17117 / CIP 110805 / LMG 28347 / Deep ecotype) protein is CTP synthase.